A 123-amino-acid chain; its full sequence is Defensin beta 118 (123 aa).

The N-terminal stretch at 1–19 (MKLLLLALPMLVLLPQVIP) is a signal peptide. 3 cysteine pairs are disulfide-bonded: Cys-27/Cys-54, Cys-34/Cys-48, and Cys-38/Cys-55. Positions 65–123 (VPTTSPTPLSDSTPGIIDDILTVRFTTDYFEVSSKKDMIEESEAGRGTETSLPNVHHSS) are excised as a propeptide. The span at 100-110 (KDMIEESEAGR) shows a compositional bias: basic and acidic residues. The tract at residues 100–123 (KDMIEESEAGRGTETSLPNVHHSS) is disordered. Residues 112-123 (TETSLPNVHHSS) show a composition bias toward polar residues.

Belongs to the beta-defensin family. In terms of processing, the three-dimensional structure formed by the three intramolecular disulfide bridges is indispensable for antimicrobial activity.

The protein localises to the secreted. Its function is as follows. Host defense peptide that exhibits antimicrobial activity against both Gram-negative bacteria, such as E.coli and S.typhimurium, and Gram-positive bacteria, such as S.aureus and B.subtilis. Inhibits cell adhesion of E.coli on intestinal epithelial enterocytes. Causes rapid permeabilization of both the outer and inner membrane of E.coli, leading to morphological alterations on the bacterial surface. Binds to bacterial lipopolysaccharides (LPS) with high affinity, and may thereby be involved in immunoregulation through LPS neutralization. May contribute to epididymal innate immunity and protect the sperm against attack by microorganisms. The polypeptide is Defensin beta 118 (DEFB118) (Gorilla gorilla gorilla (Western lowland gorilla)).